Reading from the N-terminus, the 343-residue chain is Glycogen biosynthesis protein GlgD (343 aa).

The protein belongs to the bacterial/plant glucose-1-phosphate adenylyltransferase family.

Required for the synthesis of glycogen. The chain is Glycogen biosynthesis protein GlgD (glgD) from Bacillus subtilis (strain 168).